Consider the following 493-residue polypeptide: Poly(ribitol-phosphate) alpha-N-acetylglucosaminyltransferase (493 aa).

UDP-N-acetyl-alpha-D-glucosamine is bound by residues Gly17, Lys59, His249, Arg326, Lys331, Thr383, and 403-411 (EGQGLSMIE).

This sequence belongs to the glycosyltransferase group 1 family. Homotrimer.

It is found in the cytoplasm. It carries out the reaction 4-O-[(D-ribitylphospho)(n)-di{(2R)-glycerylphospho}]-N-acetyl-beta-D-mannosaminyl-(1-&gt;4)-N-acetyl-alpha-D-glucosaminyl di-trans,octa-cis-undecaprenyl diphosphate + n UDP-N-acetyl-alpha-D-glucosamine = 4-O-([2-N-acetyl-alpha-D-glucosaminyl-1-D-ribitylphospho](n)-di{[2R]-1-glycerylphospho})-N-acetyl-beta-D-mannosaminyl-(1-&gt;4)-N-acetyl-alpha-D-glucosaminyl di-trans,octa-cis-undecaprenyl diphosphate + n UDP + n H(+). Its pathway is cell wall biogenesis; poly(ribitol phosphate) teichoic acid biosynthesis. In terms of biological role, attaches N-acetyl-alpha-D-glucosamine residues to poly(RboP)-wall teichoic acids (WTAs). The protein is Poly(ribitol-phosphate) alpha-N-acetylglucosaminyltransferase of Staphylococcus aureus (strain COL).